The chain runs to 142 residues: Hemoglobin subunit alpha-A (142 aa).

Residues 2–142 enclose the Globin domain; sequence VLSPTDKSIV…VSTVLTSKYR (141 aa). H59 lines the O2 pocket. H88 serves as a coordination point for heme b.

The protein belongs to the globin family. As to quaternary structure, heterotetramer of two alpha chains and two beta chains. In terms of tissue distribution, red blood cells.

Functionally, involved in oxygen transport from the lung to the various peripheral tissues. The chain is Hemoglobin subunit alpha-A (HBAA) from Otolemur crassicaudatus (Brown greater galago).